Here is a 430-residue protein sequence, read N- to C-terminus: Adenylosuccinate synthetase (430 aa).

GTP contacts are provided by residues 12–18 (GDEGKGK) and 40–42 (GHT). Asp-13 acts as the Proton acceptor in catalysis. Mg(2+) is bound by residues Asp-13 and Gly-40. IMP-binding positions include 13 to 16 (DEGK), 38 to 41 (NAGH), Thr-130, Arg-144, Gln-224, Thr-239, and Arg-303. His-41 acts as the Proton donor in catalysis. 299–305 (TVTGRKR) is a binding site for substrate. GTP contacts are provided by residues Arg-305, 331 to 333 (KLD), and 413 to 415 (STS).

It belongs to the adenylosuccinate synthetase family. In terms of assembly, homodimer. Requires Mg(2+) as cofactor.

The protein localises to the cytoplasm. The catalysed reaction is IMP + L-aspartate + GTP = N(6)-(1,2-dicarboxyethyl)-AMP + GDP + phosphate + 2 H(+). Its pathway is purine metabolism; AMP biosynthesis via de novo pathway; AMP from IMP: step 1/2. In terms of biological role, plays an important role in the de novo pathway of purine nucleotide biosynthesis. Catalyzes the first committed step in the biosynthesis of AMP from IMP. In Methylorubrum extorquens (strain CM4 / NCIMB 13688) (Methylobacterium extorquens), this protein is Adenylosuccinate synthetase.